The sequence spans 1306 residues: Disease resistance protein Roq1 (1306 aa).

The 170-residue stretch at 10–179 folds into the TIR domain; it reads RSYDVFLSFR…QILKDIFDKF (170 aa). NAD(+)-binding positions include 19 to 24 and glycine 52; that span reads RGEDTR. Glutamate 86 is an active-site residue. The NB-ARC domain maps to 198 to 417; sequence KKLSSLLRMD…IDRLKDNPEG (220 aa). 18 LRR repeats span residues 200–224, 252–275, 417–440, 599–622, 645–669, 670–693, 716–739, 741–763, 784–807, 808–831, 832–857, 878–902, 904–926, 927–949, 961–983, 987–1010, 1013–1036, and 1045–1070; these read LSSL…GVGK, LQHH…EFVD, GEIM…IFLD, PSKL…AKRL, ITNL…VGFL, KNLI…IQSE, MTHL…IEHL, SLEN…IWRF, SNCT…IGNL, TSLN…IWGL, TSLT…AINH, LDLL…IWML, FLRI…LGHL, EHLE…VARL, FAIG…VFGS, LGSV…MNQL, LEYL…SIKE, and LRIM…EYQN.

This sequence belongs to the disease resistance TIR-NB-LRR family. In terms of assembly, homodimer.

The catalysed reaction is NAD(+) + H2O = ADP-D-ribose + nicotinamide + H(+). It carries out the reaction NAD(+) = 2'cADPR + nicotinamide + H(+). Its function is as follows. Disease resistance (R) protein that specifically recognizes the Xanthomonas and Pseudomonas effector proteins XopQ and HopQ1, and triggers cell death. An NAD(+) hydrolase (NADase): in response to activation, catalyzes cleavage of NAD(+) into ADP-D-ribose (ADPR) and nicotinamide; NAD(+) cleavage triggers a defense system that promotes cell death. Makes small amounts of 2' cyclic ADPR (2'cADPR). This Nicotiana benthamiana protein is Disease resistance protein Roq1.